A 272-amino-acid polypeptide reads, in one-letter code: 3-methyl-2-oxobutanoate hydroxymethyltransferase (272 aa).

Residues Asp-51 and Asp-90 each contribute to the Mg(2+) site. Residues 51 to 52 (DS), Asp-90, and Lys-118 contribute to the 3-methyl-2-oxobutanoate site. Glu-120 provides a ligand contact to Mg(2+). Residue Glu-187 is the Proton acceptor of the active site.

It belongs to the PanB family. In terms of assembly, homodecamer; pentamer of dimers. Mg(2+) is required as a cofactor.

Its subcellular location is the cytoplasm. It carries out the reaction 3-methyl-2-oxobutanoate + (6R)-5,10-methylene-5,6,7,8-tetrahydrofolate + H2O = 2-dehydropantoate + (6S)-5,6,7,8-tetrahydrofolate. The protein operates within cofactor biosynthesis; (R)-pantothenate biosynthesis; (R)-pantoate from 3-methyl-2-oxobutanoate: step 1/2. In terms of biological role, catalyzes the reversible reaction in which hydroxymethyl group from 5,10-methylenetetrahydrofolate is transferred onto alpha-ketoisovalerate to form ketopantoate. The polypeptide is 3-methyl-2-oxobutanoate hydroxymethyltransferase (Xylella fastidiosa (strain 9a5c)).